A 209-amino-acid chain; its full sequence is Small ribosomal subunit protein uS3 (209 aa).

Residues 38-107 (IRKFIKNKYY…RVVINIEEIK (70 aa)) enclose the KH type-2 domain.

This sequence belongs to the universal ribosomal protein uS3 family. As to quaternary structure, part of the 30S ribosomal subunit. Forms a tight complex with proteins S10 and S14.

Functionally, binds the lower part of the 30S subunit head. Binds mRNA in the 70S ribosome, positioning it for translation. The chain is Small ribosomal subunit protein uS3 from Thermotoga sp. (strain RQ2).